Reading from the N-terminus, the 355-residue chain is Protein pelota homolog (355 aa).

Belongs to the eukaryotic release factor 1 family. Pelota subfamily. In terms of assembly, monomer. The cofactor is a divalent metal cation.

The protein resides in the cytoplasm. In terms of biological role, may function in recognizing stalled ribosomes, interact with stem-loop structures in stalled mRNA molecules, and effect endonucleolytic cleavage of the mRNA. May play a role in the release non-functional ribosomes and degradation of damaged mRNAs. Has endoribonuclease activity. The chain is Protein pelota homolog from Haloarcula marismortui (strain ATCC 43049 / DSM 3752 / JCM 8966 / VKM B-1809) (Halobacterium marismortui).